The chain runs to 376 residues: Succinyl-diaminopimelate desuccinylase (376 aa).

Residue His-67 participates in Zn(2+) binding. Asp-69 is an active-site residue. Asp-100 serves as a coordination point for Zn(2+). The Proton acceptor role is filled by Glu-134. Glu-135, Glu-163, and His-349 together coordinate Zn(2+).

The protein belongs to the peptidase M20A family. DapE subfamily. Homodimer. The cofactor is Zn(2+). Co(2+) is required as a cofactor.

It carries out the reaction N-succinyl-(2S,6S)-2,6-diaminopimelate + H2O = (2S,6S)-2,6-diaminopimelate + succinate. It participates in amino-acid biosynthesis; L-lysine biosynthesis via DAP pathway; LL-2,6-diaminopimelate from (S)-tetrahydrodipicolinate (succinylase route): step 3/3. Catalyzes the hydrolysis of N-succinyl-L,L-diaminopimelic acid (SDAP), forming succinate and LL-2,6-diaminopimelate (DAP), an intermediate involved in the bacterial biosynthesis of lysine and meso-diaminopimelic acid, an essential component of bacterial cell walls. This Actinobacillus succinogenes (strain ATCC 55618 / DSM 22257 / CCUG 43843 / 130Z) protein is Succinyl-diaminopimelate desuccinylase.